We begin with the raw amino-acid sequence, 92 residues long: Large ribosomal subunit protein eL43 (92 aa).

Positions 39, 42, 57, and 60 each coordinate Zn(2+). The C4-type zinc-finger motif lies at 39 to 60 (CSFCGKTKMKRRAVGIWHCGSC).

It belongs to the eukaryotic ribosomal protein eL43 family. In terms of assembly, component of the large ribosomal subunit.

It localises to the cytoplasm. Component of the large ribosomal subunit. The ribosome is a large ribonucleoprotein complex responsible for the synthesis of proteins in the cell. The sequence is that of Large ribosomal subunit protein eL43 (Rpl37a) from Mus musculus (Mouse).